The following is a 1487-amino-acid chain: Collagen alpha-1(II) chain (1487 aa).

An N-terminal signal peptide occupies residues 1 to 25; the sequence is MIRLGAPQSLVLLTLLIAAVLRCQG. The propeptide at 26 to 181 is N-terminal propeptide; that stretch reads QDAQEAGSCL…PGLSAGNFAA (156 aa). Residues 32–89 form the VWFC domain; that stretch reads GSCLQNGQRYKDKDVWKPSSCRICVCDTGNVLCDDIICEDPDCLNPEIPFGECCPICP. Positions 96-179 are disordered; the sequence is SGKLGPKGQK…GPPGLSAGNF (84 aa). Basic and acidic residues-rich tracts occupy residues 104–115 and 132–153; these read QKGEPGDIRDII and PRGDRGDKGEKGAPGPRGRDGE. Pro residues predominate over residues 157-172; that stretch reads PGNPGPAGPPGPPGPP. The residue at position 190 (K190) is a 5-hydroxylysine. An O-linked (Gal...) hydroxylysine glycan is attached at K190. The interval 191–1237 is disordered; sequence AGGAQMGVMQ…QREKGPDPMQ (1047 aa). The segment covering 192-203 has biased composition (low complexity); the sequence is GGAQMGVMQGPM. Residues 201-1214 form a triple-helical region region; that stretch reads GPMGPMGPRG…PGPPGPPGPP (1014 aa). Residues 208 to 217 are compositionally biased toward pro residues; it reads PRGPPGPAGA. Over residues 218 to 239 the composition is skewed to low complexity; that stretch reads PGPQGFQGNPGEPGEPGVSGPM. Basic and acidic residues predominate over residues 251–265; the sequence is PGDDGEAGKPGKSGE. 3 positions are modified to 5-hydroxylysine: K287, K299, and K308. Residues K287, K299, and K308 are each glycosylated (O-linked (Gal...) hydroxylysine). Composition is skewed to low complexity over residues 310–320 and 335–350; these read ESGSPGENGSP and TGPAGAAGARGNDGQP. Residues 360–369 show a composition bias toward gly residues; sequence GPAGGPGFPG. 2 stretches are compositionally biased toward low complexity: residues 370–382 and 403–431; these read APGAKGEAGPTGA and PAGASGNPGTDGIPGAKGSAGAPGIAGAP. Residue K374 is modified to 5-hydroxylysine. The O-linked (Gal...) hydroxylysine glycan is linked to K374. Positions 433-442 are enriched in pro residues; the sequence is FPGPRGPPGP. Positions 472–485 are enriched in low complexity; the sequence is ETGPAGPQGAPGPA. A 5-hydroxylysine mark is found at K608 and K620. O-linked (Gal...) hydroxylysine glycans are attached at residues K608 and K620. Low complexity predominate over residues 622–631; it reads LAGAPGLRGL. P659 and P668 each carry 4-hydroxyproline. P670 is subject to 3-hydroxyproline. 2 positions are modified to 4-hydroxyproline: P671 and P674. Positions 706–736 are enriched in low complexity; that stretch reads ERGSPGAQGLQGPRGLPGTPGTDGPKGAAGP. The span at 764–775 shows a compositional bias: basic and acidic residues; the sequence is KGDRGDVGEKGP. Composition is skewed to low complexity over residues 833-848 and 877-914; these read AGFAGPPGADGQPGAK and PTGVTGPKGARGAQGPPGATGFPGAAGRVGPPGANGNP. A 3-hydroxyproline modification is found at P907. 4-hydroxyproline occurs at positions 908, 914, and 920. Residues 962–980 show a composition bias toward low complexity; sequence DGPSGLDGPPGPQGLAGQR. Residues 1069–1079 are compositionally biased toward pro residues; that stretch reads APGPPGSPGPA. Residues 1115-1129 are compositionally biased toward basic and acidic residues; the sequence is RGDKGESGEQGERGL. A 3-hydroxyproline modification is found at P1144. Composition is skewed to low complexity over residues 1148–1157 and 1171–1181; these read SGDQGASGPA and PSGKDGSNGIP. A 4-hydroxyproline modification is found at P1181. A 3-hydroxyproline modification is found at P1186. Position 1187 is a 4-hydroxyproline (P1187). Residues 1199 to 1216 show a composition bias toward pro residues; the sequence is VGPPGSPGPPGPPGPPGP. 3-hydroxyproline is present on P1201. A 4-hydroxyproline mark is found at P1202 and P1205. Residue P1207 is modified to 3-hydroxyproline. 2 positions are modified to 4-hydroxyproline: P1208 and P1211. P1213 carries the 3-hydroxyproline modification. A 4-hydroxyproline modification is found at P1214. The tract at residues 1215-1241 is nonhelical region (C-terminal); sequence GPGIDMSAFAGLGQREKGPDPMQYMRA. The 235-residue stretch at 1253 to 1487 folds into the Fibrillar collagen NC1 domain; sequence VEVDATLKSL…GVDIGPVCFL (235 aa). 3 disulfides stabilise this stretch: C1283/C1315, C1323/C1485, and C1393/C1438. Residues D1301, N1303, Q1304, C1306, and D1309 each coordinate Ca(2+).

This sequence belongs to the fibrillar collagen family. Homotrimers of alpha 1(II) chains. Post-translationally, contains mostly 4-hydroxyproline. Prolines at the third position of the tripeptide repeating unit (G-X-P) are 4-hydroxylated in some or all of the chains. In terms of processing, contains 3-hydroxyproline at a few sites. This modification occurs on the first proline residue in the sequence motif Gly-Pro-Hyp, where Hyp is 4-hydroxyproline. Lysine residues at the third position of the tripeptide repeating unit (G-X-Y) are 5-hydroxylated in some or all of the chains. Post-translationally, O-glycosylated on hydroxylated lysine residues. The O-linked glycan consists of a Glc-Gal disaccharide.

It is found in the secreted. It localises to the extracellular space. The protein resides in the extracellular matrix. Its function is as follows. Type II collagen is specific for cartilaginous tissues. It is essential for the normal embryonic development of the skeleton, for linear growth and for the ability of cartilage to resist compressive forces. The protein is Collagen alpha-1(II) chain of Mus musculus (Mouse).